The following is a 426-amino-acid chain: Serine--tRNA ligase (426 aa).

233 to 235 (TAE) provides a ligand contact to L-serine. 264–266 (RSE) serves as a coordination point for ATP. Glu287 is an L-serine binding site. ATP is bound at residue 351-354 (EISS). Position 387 (Ser387) interacts with L-serine.

This sequence belongs to the class-II aminoacyl-tRNA synthetase family. Type-1 seryl-tRNA synthetase subfamily. Homodimer. The tRNA molecule binds across the dimer.

It localises to the cytoplasm. It carries out the reaction tRNA(Ser) + L-serine + ATP = L-seryl-tRNA(Ser) + AMP + diphosphate + H(+). It catalyses the reaction tRNA(Sec) + L-serine + ATP = L-seryl-tRNA(Sec) + AMP + diphosphate + H(+). It participates in aminoacyl-tRNA biosynthesis; selenocysteinyl-tRNA(Sec) biosynthesis; L-seryl-tRNA(Sec) from L-serine and tRNA(Sec): step 1/1. Its function is as follows. Catalyzes the attachment of serine to tRNA(Ser). Is also able to aminoacylate tRNA(Sec) with serine, to form the misacylated tRNA L-seryl-tRNA(Sec), which will be further converted into selenocysteinyl-tRNA(Sec). This Pseudomonas syringae pv. syringae (strain B728a) protein is Serine--tRNA ligase.